The primary structure comprises 293 residues: Ribonuclease HIII (293 aa).

Positions 78–293 (LPLIGTDEVG…TEKAKKRLER (216 aa)) constitute an RNase H type-2 domain. D84, E85, and D187 together coordinate a divalent metal cation.

The protein belongs to the RNase HII family. RnhC subfamily. It depends on Mn(2+) as a cofactor. Mg(2+) is required as a cofactor.

Its subcellular location is the cytoplasm. It catalyses the reaction Endonucleolytic cleavage to 5'-phosphomonoester.. In terms of biological role, endonuclease that specifically degrades the RNA of RNA-DNA hybrids. This Streptococcus pneumoniae (strain Taiwan19F-14) protein is Ribonuclease HIII.